The primary structure comprises 424 residues: Probable ribonuclease FAU-1 (424 aa).

This sequence belongs to the FAU-1 family.

Probable RNase involved in rRNA stability through maturation and/or degradation of precursor rRNAs. Binds to RNA in loop regions with AU-rich sequences. The polypeptide is Probable ribonuclease FAU-1 (Saccharolobus solfataricus (strain ATCC 35092 / DSM 1617 / JCM 11322 / P2) (Sulfolobus solfataricus)).